The sequence spans 241 residues: ATP synthase subunit a (241 aa).

Transmembrane regions (helical) follow at residues 30 to 50 (GQVF…ISLG), 91 to 111 (FIGT…LIPW), 128 to 148 (INTT…AGLS), 193 to 213 (LVVG…VMFL), and 214 to 234 (GLFT…YYIG).

The protein belongs to the ATPase A chain family. F-type ATPases have 2 components, CF(1) - the catalytic core - and CF(0) - the membrane proton channel. CF(1) has five subunits: alpha(3), beta(3), gamma(1), delta(1), epsilon(1). CF(0) has four main subunits: a, b, b' and c.

The protein localises to the cellular thylakoid membrane. In terms of biological role, key component of the proton channel; it plays a direct role in the translocation of protons across the membrane. This is ATP synthase subunit a from Prochlorococcus marinus (strain MIT 9312).